A 524-amino-acid chain; its full sequence is N-acetylgalactosamine-6-sulfatase (524 aa).

A signal peptide spans 1 to 27; the sequence is MTACSTAIRAQQLLLPVLSALGLLAAG. The segment at 28–381 is catalytic domain; it reads APQPPNIVLL…PTMLQGHIID (354 aa). Residues Asp40, Asp41, and Cys80 each coordinate Ca(2+). Cys80 (nucleophile) is an active-site residue. Position 80 is a 3-oxoalanine (Cys) (Cys80). His143 is a catalytic residue. Asn205 is a glycosylation site (N-linked (GlcNAc...) asparagine). Residues Asp290 and Asn291 each contribute to the Ca(2+) site. The cysteines at positions 310 and 421 are disulfide-linked. A glycan (N-linked (GlcNAc...) asparagine) is linked at Asn425. 2 disulfide bridges follow: Cys491–Cys520 and Cys503–Cys509.

It belongs to the sulfatase family. In terms of assembly, homodimer. Requires Ca(2+) as cofactor. The conversion to 3-oxoalanine (also known as C-formylglycine, FGly), of a serine or cysteine residue in prokaryotes and of a cysteine residue in eukaryotes, is critical for catalytic activity.

The protein resides in the lysosome. The enzyme catalyses Hydrolysis of the 6-sulfate groups of the N-acetyl-D-galactosamine 6-sulfate units of chondroitin sulfate and of the D-galactose 6-sulfate units of keratan sulfate.. This chain is N-acetylgalactosamine-6-sulfatase (Galns), found in Rattus norvegicus (Rat).